Consider the following 378-residue polypeptide: tRNA (guanine(26)-N(2))-dimethyltransferase (378 aa).

Residues 4–374 (KEVTEGKVRI…KEYEEITKCI (371 aa)) enclose the Trm1 methyltransferase domain. S-adenosyl-L-methionine-binding residues include R44, R69, D87, D114, and A115. 4 residues coordinate Zn(2+): C246, C249, C263, and C266.

The protein belongs to the class I-like SAM-binding methyltransferase superfamily. Trm1 family.

The catalysed reaction is guanosine(26) in tRNA + 2 S-adenosyl-L-methionine = N(2)-dimethylguanosine(26) in tRNA + 2 S-adenosyl-L-homocysteine + 2 H(+). Functionally, dimethylates a single guanine residue at position 26 of a number of tRNAs using S-adenosyl-L-methionine as donor of the methyl groups. The sequence is that of tRNA (guanine(26)-N(2))-dimethyltransferase from Saccharolobus solfataricus (strain ATCC 35092 / DSM 1617 / JCM 11322 / P2) (Sulfolobus solfataricus).